A 165-amino-acid polypeptide reads, in one-letter code: Protein SprT (165 aa).

The 142-residue stretch at 22 to 163 folds into the SprT-like domain; the sequence is LAQANLKLDR…RCVHCGEPLV (142 aa). Position 78 (H78) interacts with Zn(2+). E79 is an active-site residue. Zn(2+) is bound at residue H82.

It belongs to the SprT family. It depends on Zn(2+) as a cofactor.

It localises to the cytoplasm. This chain is Protein SprT, found in Salmonella paratyphi C (strain RKS4594).